An 880-amino-acid chain; its full sequence is DNA-directed RNA polymerase subunit Rpo1N (880 aa).

Zn(2+) contacts are provided by C58, C61, C68, and H71. DsDNA is bound by residues K88 and 92 to 95 (EFLK). C98 and C101 together coordinate Zn(2+). Position 138 (K138) interacts with dsDNA. Residues C146 and C149 each coordinate Zn(2+). DsDNA is bound by residues K303, 305–310 (KEGRFR), R323, and Q422. Residues D456, D458, and D460 each contribute to the Mg(2+) site. Residues R573, C575, C580, and H582 each coordinate Zn(2+). DsDNA-binding positions include 812–822 (RTSQSGYMQRR) and Q815.

It belongs to the RNA polymerase beta' chain family. Part of the 13-subunit RNA polymerase complex. Rpo1N and Rpo5 form a cleft which docks Rpo13. Interacts with Rpo8 on the periphery of the clamp head. Mg(2+) serves as cofactor. Requires Zn(2+) as cofactor.

It is found in the cytoplasm. The enzyme catalyses RNA(n) + a ribonucleoside 5'-triphosphate = RNA(n+1) + diphosphate. Functionally, DNA-dependent RNA polymerase (RNAP) catalyzes the transcription of DNA into RNA using the four ribonucleoside triphosphates as substrates. Forms the clamp head domain. The sequence is that of DNA-directed RNA polymerase subunit Rpo1N from Saccharolobus shibatae (strain ATCC 51178 / DSM 5389 / JCM 8931 / NBRC 15437 / B12) (Sulfolobus shibatae).